Reading from the N-terminus, the 304-residue chain is Glycine--tRNA ligase alpha subunit (304 aa).

This sequence belongs to the class-II aminoacyl-tRNA synthetase family. In terms of assembly, tetramer of two alpha and two beta subunits.

Its subcellular location is the cytoplasm. It catalyses the reaction tRNA(Gly) + glycine + ATP = glycyl-tRNA(Gly) + AMP + diphosphate. The chain is Glycine--tRNA ligase alpha subunit from Streptococcus agalactiae serotype Ia (strain ATCC 27591 / A909 / CDC SS700).